Consider the following 200-residue polypeptide: Nucleoside triphosphate pyrophosphatase (200 aa).

The active-site Proton acceptor is the aspartate 79.

The protein belongs to the Maf family. A divalent metal cation is required as a cofactor.

It localises to the cytoplasm. It catalyses the reaction a ribonucleoside 5'-triphosphate + H2O = a ribonucleoside 5'-phosphate + diphosphate + H(+). The enzyme catalyses a 2'-deoxyribonucleoside 5'-triphosphate + H2O = a 2'-deoxyribonucleoside 5'-phosphate + diphosphate + H(+). In terms of biological role, nucleoside triphosphate pyrophosphatase. May have a dual role in cell division arrest and in preventing the incorporation of modified nucleotides into cellular nucleic acids. The polypeptide is Nucleoside triphosphate pyrophosphatase (Legionella pneumophila (strain Corby)).